A 352-amino-acid chain; its full sequence is C-C chemokine receptor type 5 (352 aa).

Over 1–30 the chain is Extracellular; the sequence is MDYQVSSPTYDIDYYTSEPCQKINVKQIAA. At Tyr3 the chain carries Sulfotyrosine. 2 O-linked (GalNAc...) serine glycosylation sites follow: Ser6 and Ser7. Sulfotyrosine occurs at positions 10, 14, and 15. Intrachain disulfides connect Cys20-Cys269 and Cys101-Cys178. A helical membrane pass occupies residues 31–58; it reads RLLPPLYSLVFIFGFVGNILVVLILINC. Residues 59-68 lie on the Cytoplasmic side of the membrane; that stretch reads KRLKSMTDIY. A helical membrane pass occupies residues 69 to 89; it reads LLNLAISDLLFLLTVPFWAHY. The Extracellular segment spans residues 90–102; it reads AAAQWDFGNTMCQ. Residues 103 to 124 traverse the membrane as a helical segment; that stretch reads LLTGLYFIGFFSGIFFIILLTI. Over 125-141 the chain is Cytoplasmic; sequence DRYLAIVHAVFALKART. A helical membrane pass occupies residues 142–166; sequence VTFGVVTSVITWVVAVFASLPGIIF. The Extracellular portion of the chain corresponds to 167-198; it reads TRSQREGLHYTCSSHFPYSQYQFWKNFQTLKM. A helical transmembrane segment spans residues 199-218; sequence VILGLVLPLLVMVICYSGIL. Topologically, residues 219–235 are cytoplasmic; sequence KTLLRCRNEKKRHRAVR. Residues 236-260 form a helical membrane-spanning segment; it reads LIFTIMIVYFLFWAPYNIVLLLNTF. Residues 261–277 are Extracellular-facing; it reads QEFFGLNNCSSSNRLDQ. A helical membrane pass occupies residues 278–301; that stretch reads AMQVTETLGMTHCCINPIIYAFVG. Topologically, residues 302-352 are cytoplasmic; it reads EKFRNYLLVFFQKHIAKRFCKCCSIFQQEAPERASSVYTRSTAEQEISVGL. 3 S-palmitoyl cysteine lipidation sites follow: Cys321, Cys323, and Cys324. A phosphoserine; by BARK1 mark is found at Ser336, Ser337, Ser342, and Ser349.

This sequence belongs to the G-protein coupled receptor 1 family. In terms of assembly, interacts with PRAF2. Efficient ligand binding to CCL3/MIP-1alpha and CCL4/MIP-1beta requires sulfation, O-glycosylation and sialic acid modifications. Glycosylation on Ser-6 is required for efficient binding of CCL4. Interacts with GRK2. Interacts with ARRB1 and ARRB2. Interacts with CNIH4. Interacts with S100A4; this interaction stimulates T-lymphocyte chemotaxis. Sulfated on at least 2 of the N-terminal tyrosines. Sulfation is required for efficient binding of the chemokines, CCL3 and CCL4. Post-translationally, palmitoylation in the C-terminal is important for cell surface expression. In terms of processing, phosphorylation on serine residues in the C-terminal is stimulated by binding CC chemokines especially by APO-RANTES. O-glycosylated, but not N-glycosylated. Ser-6 appears to be the major site even if Ser-7 may be also O-glycosylated. Also sialylated glycans present which contribute to chemokine binding. Thr-16 and Ser-17 may also be glycosylated and, if so, with small moieties such as a T-antigen.

It localises to the cell membrane. In terms of biological role, receptor for a number of inflammatory CC-chemokines including CCL3/MIP-1-alpha, CCL4/MIP-1-beta and RANTES and subsequently transduces a signal by increasing the intracellular calcium ion level. May play a role in the control of granulocytic lineage proliferation or differentiation. Participates in T-lymphocyte migration to the infection site by acting as a chemotactic receptor. This chain is C-C chemokine receptor type 5 (CCR5), found in Macaca arctoides (Stump-tailed macaque).